A 336-amino-acid polypeptide reads, in one-letter code: Anthranilate phosphoribosyltransferase (336 aa).

5-phospho-alpha-D-ribose 1-diphosphate-binding positions include glycine 79, 82 to 83, threonine 87, 89 to 92, 107 to 115, and serine 119; these read GD, NIST, and KHGNRAMSS. Glycine 79 is an anthranilate binding site. Serine 91 is a Mg(2+) binding site. Asparagine 110 is a binding site for anthranilate. Residue arginine 165 participates in anthranilate binding. Positions 225 and 226 each coordinate Mg(2+).

This sequence belongs to the anthranilate phosphoribosyltransferase family. As to quaternary structure, homodimer. The cofactor is Mg(2+).

It carries out the reaction N-(5-phospho-beta-D-ribosyl)anthranilate + diphosphate = 5-phospho-alpha-D-ribose 1-diphosphate + anthranilate. It functions in the pathway amino-acid biosynthesis; L-tryptophan biosynthesis; L-tryptophan from chorismate: step 2/5. Functionally, catalyzes the transfer of the phosphoribosyl group of 5-phosphorylribose-1-pyrophosphate (PRPP) to anthranilate to yield N-(5'-phosphoribosyl)-anthranilate (PRA). This is Anthranilate phosphoribosyltransferase from Dictyoglomus turgidum (strain DSM 6724 / Z-1310).